A 545-amino-acid polypeptide reads, in one-letter code: Aclacinomycin-N/aclacinomycin-A oxidase (545 aa).

A signal peptide (tat-type signal) is located at residues 1–43 (MFVLNEFTRRGFLGTAAAVGGTTVVTTALGGAPAAQAAVPEAA). The 181-residue stretch at 76-256 (FRGRPDVVYV…TRYWFRTPGA (181 aa)) folds into the FAD-binding PCMH-type domain. Positions 113–173 (HCFEGFVDDP…WGVTIPAGVC (61 aa)) form a cross-link, 6-(S-cysteinyl)-8alpha-(pros-histidyl)-FAD (His-Cys). The active-site Proton acceptor is Y421. T451 contributes to the aclacinomycin Y binding site. N492 is a binding site for FAD. The active-site Proton acceptor is the Y493. Y493 is a binding site for aclacinomycin Y.

It belongs to the oxygen-dependent FAD-linked oxidoreductase family. Homotetramer; dimer of dimers. The cofactor is FAD. In terms of processing, predicted to be exported by the Tat system. The position of the signal peptide cleavage has been experimentally proven. Post-translationally, the FAD cofactor is bound via a bicovalent 6-S-cysteinyl, 8alpha-N1-histidyl FAD linkage.

The enzyme catalyses aclacinomycin N + O2 = aclacinomycin A + H2O2. It catalyses the reaction aclacinomycin A + O2 = aclacinomycin Y + H2O2. Inhibited by ascorbic acid and iron ion. Involved in the modification of the terminal sugar residues in the last two steps in the biosynthesis of polyketide antibiotics of the aclacinomycin group. In the first reaction, it catalyzes the oxidation of the hydroxyl group at carbon C4 of the L-rhodinose terminal sugar moiety of aclacinomycin N (AclN) to a keto group, modifying the sugar to cinerulose A and generating aclacinomycin A (AclA). In the second reaction, it catalyzes the elimination of two hydrogen atoms from cinerulose A, leading to a double bond between carbon atoms C2 and C3 and the generation of the L-aculose terminal sugar moiety of aclacinomycin Y (AclY). It can also use aclacinomycin analogs, epsilon-pyrromycinone glycosides, rhodirubins (A, B, C and E) and all triglycosides containing L-cinerulose, L-rhodinose or 2-deoxy-L-fucose as terminal sugar. The polypeptide is Aclacinomycin-N/aclacinomycin-A oxidase (Streptomyces galilaeus).